The chain runs to 939 residues: Intimin (939 aa).

A signal peptide spans 1–41 (MITHGFYARTRHKHKLKKTFIMLSAGLGLFFYVNQNSFANG). The segment at 40-153 (NGENYFKLGS…KLTKMSPDVT (114 aa)) is peptidoglycan-binding. Positions 40–153 (NGENYFKLGS…KLTKMSPDVT (114 aa)) are sufficient for homodimerization. A required for periplasmic localization region spans residues 40–212 (NGENYFKLGS…LQAWLQHYGT (173 aa)). Positions 63 to 112 (LFYTLKTGETVADLSKSQDINLSTIWSLNKHLYSSESEMMKAAPGQQIIL) constitute a LysM domain. Residues 189–430 (DTALGIAGNQ…PQYVNELRTL (242 aa)) are inverse autotransporter. Residues 402–411 (LYSMQFRYQF) are signature sequence for beta-barrel assembly machinery (BAM), which recognizes the unfolded beta-barrel in the periplasm. Big-1 domains are found at residues 560–653 (VTDF…VIFV) and 660–751 (ITEI…VEFF). The segment at 750–939 (FFTTLTIDDG…ESNAYATCVK (190 aa)) is required and sufficient for interaction with intimin receptor Tir. A C-type lectin domain region spans residues 842 to 939 (LIVPNMSKRV…ESNAYATCVK (98 aa)). Positions 842–939 (LIVPNMSKRV…ESNAYATCVK (98 aa)) are intimin receptor Tir-binding. Cysteine 860 and cysteine 937 are disulfide-bonded.

Belongs to the intimin/invasin family. As to quaternary structure, homodimer. Interacts with Tir.

The protein resides in the cell outer membrane. Its function is as follows. An inverse autotransporter. Adhesin, which mediates attachment to the human intestine epithelial cells. Necessary for the production of attaching and effacing lesions on infected human tissue culture cells. Anchored to the outer membrane by binding to peptidoglycan (PGN) via its periplasmic domain, thus helping in receptor interactions during host invasion. PGN-binding may also aid in resisting mechanical and chemical stress during transit of the bacterium through the gastrointestinal tract of the host. Periplasmic domain binds purified E.coli PGN sacculi under acidic conditions in vitro and in vivo, but does not bind to chitin. Periplasmic domain binds PGN sacculi with an apparent dissociation constant (Kd) of 0.8 uM. No binding to PGN in vitro at normal physiological pH 7.4. The polypeptide is Intimin (Escherichia coli O127:H6 (strain E2348/69 / EPEC)).